A 254-amino-acid polypeptide reads, in one-letter code: Countin-2 (254 aa).

A signal peptide spans 1–19 (MMIKYITIAILFIASLVKA). Residues 22-107 (QFSLCPTCVD…EELTVCPKNQ (86 aa)) form the Saposin B-type domain. 3 disulfide bridges follow: cysteine 26-cysteine 103, cysteine 29-cysteine 97, and cysteine 56-cysteine 68. N-linked (GlcNAc...) asparagine glycosylation is found at asparagine 110 and asparagine 219. The disordered stretch occupies residues 231 to 254 (QMTGTGSGSGSGSGSSSGAAYLRY). The span at 233 to 245 (TGTGSGSGSGSGS) shows a compositional bias: gly residues.

It belongs to the countin family.

It localises to the secreted. Its function is as follows. Cell-counting factor that limits the minimum size of the multicellular structure. May up-regulate the expression of both gp24 and gp80, which mediate cell adhesion. The sequence is that of Countin-2 (ctnB) from Dictyostelium discoideum (Social amoeba).